Consider the following 296-residue polypeptide: Transposase for insertion sequence element IST2 (296 aa).

It belongs to the transposase mutator family.

Functionally, required for the transposition of the insertion element. The protein is Transposase for insertion sequence element IST2 of Acidithiobacillus ferrooxidans (Thiobacillus ferrooxidans).